A 331-amino-acid polypeptide reads, in one-letter code: 4-hydroxy-3-methylbut-2-enyl diphosphate reductase (331 aa).

Cys-12 provides a ligand contact to [4Fe-4S] cluster. Residues His-43 and His-81 each contribute to the (2E)-4-hydroxy-3-methylbut-2-enyl diphosphate site. Residues His-43 and His-81 each coordinate dimethylallyl diphosphate. Isopentenyl diphosphate contacts are provided by His-43 and His-81. Cys-103 contributes to the [4Fe-4S] cluster binding site. His-131 serves as a coordination point for (2E)-4-hydroxy-3-methylbut-2-enyl diphosphate. A dimethylallyl diphosphate-binding site is contributed by His-131. His-131 serves as a coordination point for isopentenyl diphosphate. Residue Glu-133 is the Proton donor of the active site. Residue Thr-170 participates in (2E)-4-hydroxy-3-methylbut-2-enyl diphosphate binding. Cys-198 provides a ligand contact to [4Fe-4S] cluster. (2E)-4-hydroxy-3-methylbut-2-enyl diphosphate contacts are provided by Ser-226, Asn-228, and Ser-271. Ser-226, Asn-228, and Ser-271 together coordinate dimethylallyl diphosphate. Positions 226, 228, and 271 each coordinate isopentenyl diphosphate.

It belongs to the IspH family. The cofactor is [4Fe-4S] cluster.

It carries out the reaction isopentenyl diphosphate + 2 oxidized [2Fe-2S]-[ferredoxin] + H2O = (2E)-4-hydroxy-3-methylbut-2-enyl diphosphate + 2 reduced [2Fe-2S]-[ferredoxin] + 2 H(+). The catalysed reaction is dimethylallyl diphosphate + 2 oxidized [2Fe-2S]-[ferredoxin] + H2O = (2E)-4-hydroxy-3-methylbut-2-enyl diphosphate + 2 reduced [2Fe-2S]-[ferredoxin] + 2 H(+). The protein operates within isoprenoid biosynthesis; dimethylallyl diphosphate biosynthesis; dimethylallyl diphosphate from (2E)-4-hydroxy-3-methylbutenyl diphosphate: step 1/1. It participates in isoprenoid biosynthesis; isopentenyl diphosphate biosynthesis via DXP pathway; isopentenyl diphosphate from 1-deoxy-D-xylulose 5-phosphate: step 6/6. In terms of biological role, catalyzes the conversion of 1-hydroxy-2-methyl-2-(E)-butenyl 4-diphosphate (HMBPP) into a mixture of isopentenyl diphosphate (IPP) and dimethylallyl diphosphate (DMAPP). Acts in the terminal step of the DOXP/MEP pathway for isoprenoid precursor biosynthesis. The protein is 4-hydroxy-3-methylbut-2-enyl diphosphate reductase of Listeria monocytogenes serotype 4b (strain CLIP80459).